Consider the following 267-residue polypeptide: Glutamate racemase (267 aa).

Substrate-binding positions include 10–11 (DS) and 42–43 (YG). The Proton donor/acceptor role is filled by cysteine 73. Residue 74-75 (NT) coordinates substrate. The active-site Proton donor/acceptor is the cysteine 183. Substrate is bound at residue 184 to 185 (TH).

This sequence belongs to the aspartate/glutamate racemases family.

It carries out the reaction L-glutamate = D-glutamate. It participates in cell wall biogenesis; peptidoglycan biosynthesis. In terms of biological role, provides the (R)-glutamate required for cell wall biosynthesis. In Lactobacillus acidophilus (strain ATCC 700396 / NCK56 / N2 / NCFM), this protein is Glutamate racemase.